A 511-amino-acid chain; its full sequence is cAMP-regulated M3L protein (511 aa).

This sequence to D.discoideum protein M3R.

The polypeptide is cAMP-regulated M3L protein (prtA) (Dictyostelium discoideum (Social amoeba)).